The sequence spans 453 residues: UDP-N-acetylmuramoylalanine--D-glutamate ligase (453 aa).

117-123 (GTNGKTT) provides a ligand contact to ATP.

The protein belongs to the MurCDEF family.

Its subcellular location is the cytoplasm. It carries out the reaction UDP-N-acetyl-alpha-D-muramoyl-L-alanine + D-glutamate + ATP = UDP-N-acetyl-alpha-D-muramoyl-L-alanyl-D-glutamate + ADP + phosphate + H(+). It participates in cell wall biogenesis; peptidoglycan biosynthesis. In terms of biological role, cell wall formation. Catalyzes the addition of glutamate to the nucleotide precursor UDP-N-acetylmuramoyl-L-alanine (UMA). This is UDP-N-acetylmuramoylalanine--D-glutamate ligase from Caldicellulosiruptor saccharolyticus (strain ATCC 43494 / DSM 8903 / Tp8T 6331).